The following is a 376-amino-acid chain: 4-hydroxy-3-methylbut-2-enyl diphosphate reductase (376 aa).

Cys-19 serves as a coordination point for [4Fe-4S] cluster. 2 residues coordinate (2E)-4-hydroxy-3-methylbut-2-enyl diphosphate: His-48 and His-99. Dimethylallyl diphosphate contacts are provided by His-48 and His-99. Residues His-48 and His-99 each contribute to the isopentenyl diphosphate site. Position 121 (Cys-121) interacts with [4Fe-4S] cluster. (2E)-4-hydroxy-3-methylbut-2-enyl diphosphate is bound at residue His-149. Dimethylallyl diphosphate is bound at residue His-149. His-149 provides a ligand contact to isopentenyl diphosphate. Glu-151 (proton donor) is an active-site residue. Thr-208 provides a ligand contact to (2E)-4-hydroxy-3-methylbut-2-enyl diphosphate. Cys-236 serves as a coordination point for [4Fe-4S] cluster. Ser-264, Asn-266, and Ser-307 together coordinate (2E)-4-hydroxy-3-methylbut-2-enyl diphosphate. Residues Ser-264, Asn-266, and Ser-307 each coordinate dimethylallyl diphosphate. Isopentenyl diphosphate is bound by residues Ser-264, Asn-266, and Ser-307.

The protein belongs to the IspH family. [4Fe-4S] cluster serves as cofactor.

It carries out the reaction isopentenyl diphosphate + 2 oxidized [2Fe-2S]-[ferredoxin] + H2O = (2E)-4-hydroxy-3-methylbut-2-enyl diphosphate + 2 reduced [2Fe-2S]-[ferredoxin] + 2 H(+). The enzyme catalyses dimethylallyl diphosphate + 2 oxidized [2Fe-2S]-[ferredoxin] + H2O = (2E)-4-hydroxy-3-methylbut-2-enyl diphosphate + 2 reduced [2Fe-2S]-[ferredoxin] + 2 H(+). The protein operates within isoprenoid biosynthesis; dimethylallyl diphosphate biosynthesis; dimethylallyl diphosphate from (2E)-4-hydroxy-3-methylbutenyl diphosphate: step 1/1. It functions in the pathway isoprenoid biosynthesis; isopentenyl diphosphate biosynthesis via DXP pathway; isopentenyl diphosphate from 1-deoxy-D-xylulose 5-phosphate: step 6/6. Its function is as follows. Catalyzes the conversion of 1-hydroxy-2-methyl-2-(E)-butenyl 4-diphosphate (HMBPP) into a mixture of isopentenyl diphosphate (IPP) and dimethylallyl diphosphate (DMAPP). Acts in the terminal step of the DOXP/MEP pathway for isoprenoid precursor biosynthesis. In Treponema pallidum (strain Nichols), this protein is 4-hydroxy-3-methylbut-2-enyl diphosphate reductase.